A 170-amino-acid chain; its full sequence is MORN repeat-containing protein 5 (170 aa).

3 MORN repeats span residues 8-30 (YFGE…TDTR), 31-53 (YIGE…SGSR), and 54-75 (FDAI…DGLQ).

As to expression, only detected in testis (at protein level).

Its subcellular location is the cell projection. It is found in the cilium. It localises to the flagellum. This chain is MORN repeat-containing protein 5 (Morn5), found in Mus musculus (Mouse).